We begin with the raw amino-acid sequence, 124 residues long: Fluoride-specific ion channel FluC (124 aa).

A run of 4 helical transmembrane segments spans residues valine 4–leucine 24, phenylalanine 35–alanine 55, isoleucine 60–serine 80, and leucine 100–isoleucine 120. Na(+) contacts are provided by glycine 74 and threonine 77.

The protein belongs to the fluoride channel Fluc/FEX (TC 1.A.43) family.

It localises to the cell inner membrane. The enzyme catalyses fluoride(in) = fluoride(out). Na(+) is not transported, but it plays an essential structural role and its presence is essential for fluoride channel function. In terms of biological role, fluoride-specific ion channel. Important for reducing fluoride concentration in the cell, thus reducing its toxicity. This is Fluoride-specific ion channel FluC from Shewanella amazonensis (strain ATCC BAA-1098 / SB2B).